Consider the following 246-residue polypeptide: Eukaryotic translation initiation factor 6 (246 aa).

Ser174 and Ser175 each carry phosphoserine; by CK1.

The protein belongs to the eIF-6 family. As to quaternary structure, monomer. Associates with the 60S ribosomal subunit. Phosphorylation at Ser-174 and Ser-175 promotes nuclear export.

Its subcellular location is the cytoplasm. The protein localises to the nucleus. It localises to the nucleolus. Its function is as follows. Binds to the 60S ribosomal subunit and prevents its association with the 40S ribosomal subunit to form the 80S initiation complex in the cytoplasm. Is also involved in ribosome biogenesis. Associates with pre-60S subunits in the nucleus and is involved in its nuclear export. This chain is Eukaryotic translation initiation factor 6 (tif-6), found in Neurospora crassa (strain ATCC 24698 / 74-OR23-1A / CBS 708.71 / DSM 1257 / FGSC 987).